The chain runs to 302 residues: Endochitinase 4 (302 aa).

A signal peptide spans 1 to 18 (EFTALSLLFSLLLLTASA). The Chitin-binding type-1 domain maps to 19-60 (EQCGKQAGGARCAAGLCCSNFGWCGNTNDYCGPGKCQSQCPS). 4 disulfide bridges follow: Cys-21–Cys-36, Cys-30–Cys-42, Cys-35–Cys-49, and Cys-54–Cys-58. The tract at residues 59–79 (PSGPSPKPPTPGPGPSGGDIG) is disordered. Over residues 61–72 (GPSPKPPTPGPG) the composition is skewed to pro residues. The active-site Proton donor is the Glu-144. The cysteines at positions 162 and 182 are disulfide-linked.

The protein belongs to the glycosyl hydrolase 19 family. Chitinase class I subfamily.

It is found in the vacuole. It carries out the reaction Random endo-hydrolysis of N-acetyl-beta-D-glucosaminide (1-&gt;4)-beta-linkages in chitin and chitodextrins.. In terms of biological role, defense against chitin-containing fungal pathogens. This chain is Endochitinase 4 (CHTB4), found in Solanum tuberosum (Potato).